A 231-amino-acid polypeptide reads, in one-letter code: MKKAVVVFSGGQDSTTCLVQALKEFDEVHAITFDYGQRHKLEIEVAQQLAKQLGVTAHKVMDVSLLNELAISSLTRDDIPVSHELQANGLPNSFVPGRNILFLTLAGIYAYQIGATTVITGVCETDFSGYPDCRDEFVQAMNQALAKGMDLPLMIRTPLMWLNKAETWALADQLGALDLVRHQTLTCYNGLIGDGCGECPACGLRQAGLKAYLDNRDLIMSALKSKQSAAH.

8-18 (FSGGQDSTTCL) contacts ATP. The Zn(2+) site is built by cysteine 187, cysteine 196, cysteine 199, and cysteine 202.

Belongs to the QueC family. Requires Zn(2+) as cofactor.

The enzyme catalyses 7-carboxy-7-deazaguanine + NH4(+) + ATP = 7-cyano-7-deazaguanine + ADP + phosphate + H2O + H(+). The protein operates within purine metabolism; 7-cyano-7-deazaguanine biosynthesis. Its function is as follows. Catalyzes the ATP-dependent conversion of 7-carboxy-7-deazaguanine (CDG) to 7-cyano-7-deazaguanine (preQ(0)). This is 7-cyano-7-deazaguanine synthase from Vibrio cholerae serotype O1 (strain ATCC 39541 / Classical Ogawa 395 / O395).